We begin with the raw amino-acid sequence, 351 residues long: Basic salivary proline-rich protein 3 (351 aa).

An N-terminal signal peptide occupies residues 1-16 (MLLILLSVALLALSSA). The residue at position 17 (glutamine 17) is a Pyrrolidone carboxylic acid. Positions 17–351 (QSLNEDVSQE…HRPPQGQPPQ (335 aa)) are disordered. A compositionally biased stretch (polar residues) spans 20–31 (NEDVSQEESPSV). The residue at position 24 (serine 24) is a Phosphoserine. 12 repeat units span residues 53–73 (PPGK…GPPP), 74–94 (RPGK…GPPP), 95–115 (RPGK…GPPP), 116–136 (RPGK…GPPP), 137–157 (RPGK…GPPP), 158–178 (RPGK…GPPP), 179–199 (HPGK…GPPP), 200–220 (RPGK…GPPP), 221–241 (RPGK…GPPP), 242–261 (RPGK…QGPP), 263–283 (RPGK…GPPP), and 284–304 (HPGK…RPPP). The 12 X 21 AA tandem repeats of [RHP]-P-G-K-P-[EQ]-G-[PQS]-P-[PS]-Q-[GE]-G-N-[QK]-[SP]-[QR]-[GR]-P-P-P stretch occupies residues 53 to 304 (PPGKPEGRPP…EGNKPQRPPP (252 aa)). N-linked (GlcNAc...) asparagine glycosylation is present at asparagine 66. A compositionally biased stretch (pro residues) spans 70 to 84 (GPPPRPGKPEGPPPQ). Asparagine 87 carries N-linked (GlcNAc...) asparagine glycosylation. O-linked (Hex) serine glycosylation occurs at serine 89. Positions 99-111 (PEGQPPQGGNQSQ) are enriched in low complexity. The N-linked (GlcNAc...) asparagine glycan is linked to asparagine 108. Positions 112-126 (GPPPRPGKPEGPPPQ) are enriched in pro residues. An N-linked (GlcNAc...) asparagine glycan is attached at asparagine 129. Positions 133-147 (GPPPRPGKPEGPPPQ) are enriched in pro residues. N-linked (GlcNAc...) asparagine glycosylation occurs at asparagine 150. 2 stretches are compositionally biased toward pro residues: residues 154-168 (GPPP…PPPQ) and 175-189 (GPPP…PPPQ). A glycan (N-linked (GlcNAc...) asparagine) is linked at asparagine 192. Pro residues predominate over residues 196–210 (GPPPRPGKPEGPPPQ). N-linked (GlcNAc...) asparagine glycosylation is found at asparagine 213 and asparagine 234. 3 stretches are compositionally biased toward pro residues: residues 217–252 (GPPP…PPPQ), 259–270 (GPPPRPGKPEGP), and 279–351 (QGPP…QPPQ). N-linked (Hex) asparagine; atypical glycosylation occurs at asparagine 297.

In terms of processing, N- and O-glycosylated; contains about 50% carbohydrate. This is composed of highly fucosylated N-linked saccharides, the major structure is a biantennary asialosaccharide containing 2 fucose residues on one antenna and an unsubstituted terminal lactosamine sequence on the other. The Gram-negative bacterium F.nucleatum binds to carbohydrates containing unsubstituted GalBeta1,4GlcNAc residues. N-glycosylation on Asn-87 is prevalent in head and neck cancer patients. Proteolytically cleaved at the tripeptide Xaa-Pro-Gln, where Xaa in the P(3) position is mostly lysine. The endoprotease may be of microbial origin. Besides on the N-terminal of mature PRB3, pyroglutamate formation found on at least Gln-67, Gln-88, Gln-256 and Gln-337.

The protein resides in the secreted. Acts as a receptor for the Gram-negative bacterium F.nucleatum. This Homo sapiens (Human) protein is Basic salivary proline-rich protein 3 (PRB3).